Here is a 299-residue protein sequence, read N- to C-terminus: Oxygen-dependent coproporphyrinogen-III oxidase (299 aa).

Residue Ser92 participates in substrate binding. 2 residues coordinate a divalent metal cation: His96 and His106. Residue His106 is the Proton donor of the active site. 108 to 110 (NVR) is a substrate binding site. Residues His145 and His175 each coordinate a divalent metal cation. The important for dimerization stretch occupies residues 240–275 (YVEFNLVWDRGTLFGLQTGGRTESILMSMPPLVRWE). Substrate is bound at residue 258 to 260 (GGR).

The protein belongs to the aerobic coproporphyrinogen-III oxidase family. Homodimer. The cofactor is a divalent metal cation.

Its subcellular location is the cytoplasm. The enzyme catalyses coproporphyrinogen III + O2 + 2 H(+) = protoporphyrinogen IX + 2 CO2 + 2 H2O. Its pathway is porphyrin-containing compound metabolism; protoporphyrin-IX biosynthesis; protoporphyrinogen-IX from coproporphyrinogen-III (O2 route): step 1/1. Its function is as follows. Involved in the heme biosynthesis. Catalyzes the aerobic oxidative decarboxylation of propionate groups of rings A and B of coproporphyrinogen-III to yield the vinyl groups in protoporphyrinogen-IX. The polypeptide is Oxygen-dependent coproporphyrinogen-III oxidase (Enterobacter sp. (strain 638)).